Consider the following 463-residue polypeptide: Probable diacyglycerol O-acyltransferase tgs1 (463 aa).

Residue histidine 137 is the Proton acceptor of the active site.

Belongs to the long-chain O-acyltransferase family.

The catalysed reaction is an acyl-CoA + a 1,2-diacyl-sn-glycerol = a triacyl-sn-glycerol + CoA. It functions in the pathway glycerolipid metabolism; triacylglycerol biosynthesis. In terms of biological role, catalyzes the terminal and only committed step in triacylglycerol synthesis by using diacylglycerol and fatty acyl CoA as substrates. Required for storage lipid synthesis. This chain is Probable diacyglycerol O-acyltransferase tgs1 (tgs1), found in Mycobacterium tuberculosis (strain CDC 1551 / Oshkosh).